The sequence spans 435 residues: Histidine--tRNA ligase (435 aa).

It belongs to the class-II aminoacyl-tRNA synthetase family.

Its subcellular location is the cytoplasm. It catalyses the reaction tRNA(His) + L-histidine + ATP = L-histidyl-tRNA(His) + AMP + diphosphate + H(+). The sequence is that of Histidine--tRNA ligase (hisS) from Aeropyrum pernix (strain ATCC 700893 / DSM 11879 / JCM 9820 / NBRC 100138 / K1).